The chain runs to 342 residues: NAD kinase (342 aa).

Aspartate 66 acts as the Proton acceptor in catalysis. NAD(+)-binding positions include 66-67 (DG), arginine 71, 141-142 (ND), lysine 152, aspartate 171, 182-187 (TAYAFS), and alanine 206.

It belongs to the NAD kinase family. A divalent metal cation serves as cofactor.

It is found in the cytoplasm. It carries out the reaction NAD(+) + ATP = ADP + NADP(+) + H(+). Its function is as follows. Involved in the regulation of the intracellular balance of NAD and NADP, and is a key enzyme in the biosynthesis of NADP. Catalyzes specifically the phosphorylation on 2'-hydroxyl of the adenosine moiety of NAD to yield NADP. The sequence is that of NAD kinase from Bifidobacterium longum (strain NCC 2705).